The sequence spans 459 residues: MSNFAIILAAGKGTRMKSDLPKVLHKVAGISMLEHVFRSVGAIQPEKTVTVVGHKAELVEEVLAGQTEFVTQSEQLGTGHAVMMTEPILEGLSGHTLVIAGDTPLITGESLKNLIDFHINHKNVATILTAETDNPFGYGRIVRNDNAEVLRIVEQKDATDFEKQIKEINTGTYVFDNERLFEALKNINTNNAQGEYYITDVIGIFRETGEKVGAYTLKDFDESLGVNDRVALATAESVMRRRINHKHMVNGVSFVNPEATYIDIDVEIASEVQIEANVTLKGQTKIGAETVLTNGTYVVDSTIGAGAVITNSMIEESSVADGVIVGPYAHIRPNSSLGAQVHIGNFVEVKGSSIGENTKAGHLTYIGNCEVGSNVNFGAGTITVNYDGKNKYKTVIGNNVFVGSNSTIIAPVELGDNSLVGAGSTITKDVPADAIAIGRGRQINKDEYATRLPHHPKNQ.

Residues 1 to 229 form a pyrophosphorylase region; the sequence is MSNFAIILAA…FDESLGVNDR (229 aa). Residues 8 to 11, lysine 22, glutamine 72, 77 to 78, 101 to 102, glycine 139, glutamate 154, asparagine 169, and asparagine 227 contribute to the UDP-N-acetyl-alpha-D-glucosamine site; these read LAAG, GT, and GD. Residue aspartate 102 participates in Ca(2+) binding. Aspartate 102 contacts Mg(2+). Asparagine 227 is a binding site for Ca(2+). A Mg(2+)-binding site is contributed by asparagine 227. The tract at residues 230 to 250 is linker; it reads VALATAESVMRRRINHKHMVN. The tract at residues 251 to 459 is N-acetyltransferase; that stretch reads GVSFVNPEAT…TRLPHHPKNQ (209 aa). UDP-N-acetyl-alpha-D-glucosamine contacts are provided by arginine 332 and lysine 350. Residue histidine 362 is the Proton acceptor of the active site. UDP-N-acetyl-alpha-D-glucosamine contacts are provided by tyrosine 365 and asparagine 376. Acetyl-CoA-binding positions include alanine 379, 385–386, serine 404, alanine 422, and arginine 439; that span reads NY.

The protein in the N-terminal section; belongs to the N-acetylglucosamine-1-phosphate uridyltransferase family. It in the C-terminal section; belongs to the transferase hexapeptide repeat family. In terms of assembly, homotrimer. The cofactor is Mg(2+). Requires Ca(2+) as cofactor.

Its subcellular location is the cytoplasm. The catalysed reaction is alpha-D-glucosamine 1-phosphate + acetyl-CoA = N-acetyl-alpha-D-glucosamine 1-phosphate + CoA + H(+). It catalyses the reaction N-acetyl-alpha-D-glucosamine 1-phosphate + UTP + H(+) = UDP-N-acetyl-alpha-D-glucosamine + diphosphate. Its pathway is nucleotide-sugar biosynthesis; UDP-N-acetyl-alpha-D-glucosamine biosynthesis; N-acetyl-alpha-D-glucosamine 1-phosphate from alpha-D-glucosamine 6-phosphate (route II): step 2/2. It functions in the pathway nucleotide-sugar biosynthesis; UDP-N-acetyl-alpha-D-glucosamine biosynthesis; UDP-N-acetyl-alpha-D-glucosamine from N-acetyl-alpha-D-glucosamine 1-phosphate: step 1/1. The protein operates within bacterial outer membrane biogenesis; LPS lipid A biosynthesis. Functionally, catalyzes the last two sequential reactions in the de novo biosynthetic pathway for UDP-N-acetylglucosamine (UDP-GlcNAc). The C-terminal domain catalyzes the transfer of acetyl group from acetyl coenzyme A to glucosamine-1-phosphate (GlcN-1-P) to produce N-acetylglucosamine-1-phosphate (GlcNAc-1-P), which is converted into UDP-GlcNAc by the transfer of uridine 5-monophosphate (from uridine 5-triphosphate), a reaction catalyzed by the N-terminal domain. In Streptococcus pneumoniae serotype 4 (strain ATCC BAA-334 / TIGR4), this protein is Bifunctional protein GlmU.